The sequence spans 833 residues: Leucine--tRNA ligase (833 aa).

Positions 41–52 (PYPSGAGLHVGH) match the 'HIGH' region motif. The 'KMSKS' region motif lies at 610-614 (KMSKS). Lys-613 serves as a coordination point for ATP.

It belongs to the class-I aminoacyl-tRNA synthetase family.

The protein resides in the cytoplasm. It catalyses the reaction tRNA(Leu) + L-leucine + ATP = L-leucyl-tRNA(Leu) + AMP + diphosphate. The chain is Leucine--tRNA ligase from Streptococcus equi subsp. zooepidemicus (strain H70).